The primary structure comprises 626 residues: Colicin-Ib (626 aa).

Polar residues predominate over residues 276–286 (QQLTQQKNTPD). Residues 276–308 (QQLTQQKNTPDGKTIVSPEKFPGRSSTNHSIVV) form a disordered region. A helical membrane pass occupies residues 588–612 (FSVMLGTPVGILGFAIIMAAVSALV).

It belongs to the channel forming colicin family.

It is found in the host membrane. Functionally, this colicin is a channel-forming colicin. This class of transmembrane toxins depolarize the cytoplasmic membrane, leading to dissipation of cellular energy. Colicins are polypeptide toxins produced by and active against E.coli and closely related bacteria. This Escherichia coli protein is Colicin-Ib (cib).